Here is a 456-residue protein sequence, read N- to C-terminus: Exodeoxyribonuclease 7 large subunit (456 aa).

The protein belongs to the XseA family. Heterooligomer composed of large and small subunits.

Its subcellular location is the cytoplasm. It catalyses the reaction Exonucleolytic cleavage in either 5'- to 3'- or 3'- to 5'-direction to yield nucleoside 5'-phosphates.. Bidirectionally degrades single-stranded DNA into large acid-insoluble oligonucleotides, which are then degraded further into small acid-soluble oligonucleotides. The polypeptide is Exodeoxyribonuclease 7 large subunit (Lactobacillus johnsonii (strain CNCM I-12250 / La1 / NCC 533)).